A 141-amino-acid chain; its full sequence is uncharacterized protein (141 aa).

3 consecutive transmembrane segments (helical) span residues 32 to 52, 69 to 89, and 109 to 129; these read LIVLIFSILIAISAYISTSII, IIALISTFIGGIVAWLIIAGF, and FTGYGFLPNIVGALITIPIAY.

Its subcellular location is the cell membrane. This is an uncharacterized protein from Methanocaldococcus jannaschii (strain ATCC 43067 / DSM 2661 / JAL-1 / JCM 10045 / NBRC 100440) (Methanococcus jannaschii).